A 182-amino-acid chain; its full sequence is Dirigent protein 1 (182 aa).

The first 24 residues, Met1–Ala24, serve as a signal peptide directing secretion. An N-linked (GlcNAc...) asparagine glycan is attached at Asn125.

Belongs to the plant dirigent protein family. Homodimer.

It is found in the secreted. It localises to the extracellular space. The protein localises to the apoplast. Its function is as follows. Dirigent proteins impart stereoselectivity on the phenoxy radical-coupling reaction, yielding optically active lignans from two molecules of coniferyl alcohol in the biosynthesis of lignans, flavonolignans, and alkaloids and thus plays a central role in plant secondary metabolism. This is Dirigent protein 1 (DIR1) from Arabidopsis thaliana (Mouse-ear cress).